A 237-amino-acid polypeptide reads, in one-letter code: Purine nucleoside phosphorylase DeoD-type (237 aa).

His-5 serves as a coordination point for a purine D-ribonucleoside. Residues Gly-21, Arg-25, Arg-44, and 88 to 91 contribute to the phosphate site; that span reads RVGS. A purine D-ribonucleoside contacts are provided by residues 180-182 and 204-205; these read EME and SD. Asp-205 functions as the Proton donor in the catalytic mechanism.

The protein belongs to the PNP/UDP phosphorylase family. As to quaternary structure, homohexamer; trimer of homodimers.

The enzyme catalyses a purine D-ribonucleoside + phosphate = a purine nucleobase + alpha-D-ribose 1-phosphate. It catalyses the reaction a purine 2'-deoxy-D-ribonucleoside + phosphate = a purine nucleobase + 2-deoxy-alpha-D-ribose 1-phosphate. Its function is as follows. Catalyzes the reversible phosphorolytic breakdown of the N-glycosidic bond in the beta-(deoxy)ribonucleoside molecules, with the formation of the corresponding free purine bases and pentose-1-phosphate. The chain is Purine nucleoside phosphorylase DeoD-type from Edwardsiella ictaluri (strain 93-146).